A 39-amino-acid chain; its full sequence is Cytochrome b6-f complex subunit 5 (39 aa).

Residues 5–25 traverse the membrane as a helical segment; it reads LLCGIVLGLVPVTLLGLFVSA.

It belongs to the PetG family. The 4 large subunits of the cytochrome b6-f complex are cytochrome b6, subunit IV (17 kDa polypeptide, PetD), cytochrome f and the Rieske protein, while the 4 small subunits are PetG, PetL, PetM and PetN. The complex functions as a dimer.

It is found in the cellular thylakoid membrane. Functionally, component of the cytochrome b6-f complex, which mediates electron transfer between photosystem II (PSII) and photosystem I (PSI), cyclic electron flow around PSI, and state transitions. PetG is required for either the stability or assembly of the cytochrome b6-f complex. The sequence is that of Cytochrome b6-f complex subunit 5 from Prochlorococcus marinus (strain NATL1A).